The sequence spans 974 residues: Hexokinase-1 (974 aa).

A disordered region spans residues 1 to 42; that stretch reads MGWGAPLLSRMLHGPGQAGETSPVPERQSGSENPASEDRRPL. The segment at 57–66 is mitochondrial-binding peptide (MBP); the sequence is CQRGQAVDVE. Hexokinase domains follow at residues 72–514 and 520–962; these read PLTE…MVTA and AEQH…LITA. ATP contacts are provided by residues arginine 86 and 140–145; that span reads DLGGSS. The hexokinase small subdomain 1 stretch occupies residues 129 to 263; that stretch reads DGSEKGDFIA…DYDANIVAVV (135 aa). 140 to 147 contacts D-glucose 6-phosphate; sequence DLGGSSFR. D-glucose is bound by residues serine 211, 228-229, and 264-265; these read TK and ND. The interval 264–503 is hexokinase large subdomain 1; the sequence is NDTVGTMMTC…SDVRFLLSES (240 aa). Residues aspartate 265 and threonine 288 each contribute to the D-glucose 6-phosphate site. D-glucose contacts are provided by residues asparagine 291, glutamate 316, and 347–350; that span reads QLFE. A Phosphoserine modification is found at serine 393. A D-glucose 6-phosphate-binding site is contributed by 469–471; sequence DGS. 481 to 482 provides a ligand contact to ATP; sequence RR. Residues serine 505 and 588 to 592 contribute to the D-glucose 6-phosphate site; that span reads DLGGT. The hexokinase small subdomain 2 stretch occupies residues 577 to 711; sequence DGTEHGDFLA…EFDLDVVAVV (135 aa). 588–593 serves as a coordination point for ATP; sequence DLGGTN. Residues 659–660, 676–677, and 712–713 contribute to the D-glucose site; these read SF, TK, and ND. The tract at residues 712-951 is hexokinase large subdomain 2; sequence NDTVGTMMTC…CTVSFLLSED (240 aa). Residues aspartate 713 and threonine 736 each contribute to the D-glucose 6-phosphate site. Threonine 736 lines the ATP pocket. D-glucose contacts are provided by residues 738 to 739, glutamate 764, and glutamate 798; that span reads SN. ATP is bound by residues 803 to 804, 840 to 844, and 919 to 923; these read GM, TKFLS, and TLYKL. D-glucose 6-phosphate-binding positions include 917–919 and serine 953; that span reads DGT.

Belongs to the hexokinase family. Monomer. Interacts with RABL2/RABL2A; binds preferentially to GTP-bound RABL2. Interacts with VDAC1. The HK1-VDAC1 complex interacts with ATF2. Interacts (via N-terminal spermatogenic cell-specific region) with PFKM isoform 2 and isoform 3 (via C-terminus). Interacts with SMAD5. Post-translationally, tyrosine-phosphorylated. As to expression, in rapidly growing tumor cells exhibiting high glucose catabolic rates, isoform HK1 is markedly elevated. Isoform HK1-SA, isoform HK1-SB and isoform HK1-SC are found only in spermatogenic cells. Isoform HK1-SC is detected in round spermatids, condensing spermatids and mature sperm where it is found in the head membranes, mitochondria of the midpiece and the fibrous sheath of the flagellum. Expressed within the principal piece and midpiece of sperm tail (at protein level).

Its subcellular location is the mitochondrion outer membrane. It is found in the cytoplasm. The protein resides in the cytosol. It localises to the membrane. It carries out the reaction a D-hexose + ATP = a D-hexose 6-phosphate + ADP + H(+). It catalyses the reaction D-fructose + ATP = D-fructose 6-phosphate + ADP + H(+). The enzyme catalyses D-glucose + ATP = D-glucose 6-phosphate + ADP + H(+). The catalysed reaction is D-mannose + ATP = D-mannose 6-phosphate + ADP + H(+). It carries out the reaction D-glucosamine + ATP = D-glucosamine 6-phosphate + ADP + H(+). It participates in carbohydrate metabolism; hexose metabolism. The protein operates within carbohydrate degradation; glycolysis; D-glyceraldehyde 3-phosphate and glycerone phosphate from D-glucose: step 1/4. With respect to regulation, hexokinase is an allosteric enzyme inhibited by its product D-glucose 6-phosphate. Hexokinase activity is inhibited by N-acetyl-D-glucosamine. Catalyzes the phosphorylation of various hexoses, such as D-glucose, D-glucosamine, D-fructose, D-mannose and 2-deoxy-D-glucose, to hexose 6-phosphate (D-glucose 6-phosphate, D-glucosamine 6-phosphate, D-fructose 6-phosphate, D-mannose 6-phosphate and 2-deoxy-D-glucose 6-phosphate, respectively). Does not phosphorylate N-acetyl-D-glucosamine. Mediates the initial step of glycolysis by catalyzing phosphorylation of D-glucose to D-glucose 6-phosphate. Involved in innate immunity and inflammation by acting as a pattern recognition receptor for bacterial peptidoglycan. When released in the cytosol, N-acetyl-D-glucosamine component of bacterial peptidoglycan inhibits the hexokinase activity of HK1 and causes its dissociation from mitochondrial outer membrane, thereby activating the NLRP3 inflammasome. The protein is Hexokinase-1 of Mus musculus (Mouse).